A 626-amino-acid polypeptide reads, in one-letter code: Cysteine desulfurase (626 aa).

Disordered stretches follow at residues 1-21 (MTNTVPSVPAVPNLPTQSDPF) and 41-64 (AGVSEAESAPTPLSVPTPALPTTS). The cargo-loading domain stretch occupies residues 1–225 (MTNTVPSVPA…AGAVGFDIHQ (225 aa)). Residues 226–626 (VRRDFPILQE…RRIQTGSLAL (401 aa)) form a cysteine desulfurase domain region. Position 444 is an N6-(pyridoxal phosphate)lysine (Lys444). The active-site Cysteine persulfide intermediate is the Cys582.

It belongs to the class-V pyridoxal-phosphate-dependent aminotransferase family. Csd subfamily. As to quaternary structure, there are 1-2 copies of this protein in each type 2A encapsulin shell. Requires pyridoxal 5'-phosphate as cofactor.

Its subcellular location is the encapsulin nanocompartment. It carries out the reaction (sulfur carrier)-H + L-cysteine = (sulfur carrier)-SH + L-alanine. Encapsulated enzyme is 7-fold more active than encapsulated enzyme. Functionally, cargo protein of a type 2A encapsulin nanocompartment probably involved in sulfur metabolism. Cysteine desulfurases mobilize the sulfur from L-cysteine to yield L-alanine, an essential step in sulfur metabolism for biosynthesis of a variety of sulfur-containing biomolecules. In Synechococcus elongatus (strain ATCC 33912 / PCC 7942 / FACHB-805) (Anacystis nidulans R2), this protein is Cysteine desulfurase.